The following is a 345-amino-acid chain: DNA-directed RNA polymerases I and III subunit rpac1 (345 aa).

Residues 1 to 11 (MVNKSTTNGVS) are compositionally biased toward polar residues. The tract at residues 1–20 (MVNKSTTNGVSDPNLENKRT) is disordered.

The protein belongs to the archaeal Rpo3/eukaryotic RPB3 RNA polymerase subunit family. Component of the RNA polymerase I (Pol I) and RNA polymerase III (Pol III) complexes consisting of at least 13 and 17 subunits, respectively. Interacts with RPAC19/RPAC2.

It is found in the nucleus. Its function is as follows. DNA-dependent RNA polymerase catalyzes the transcription of DNA into RNA using the four ribonucleoside triphosphates as substrates. Common component of RNA polymerases I and III which synthesize ribosomal RNA precursors and small RNAs, such as 5S rRNA and tRNAs, respectively. RPAC1 is part of the Pol core element with the central large cleft and probably a clamp element that moves to open and close the cleft. The protein is DNA-directed RNA polymerases I and III subunit rpac1 (polr1c) of Dictyostelium discoideum (Social amoeba).